The primary structure comprises 922 residues: MLDSIIKILFGSKHERDIKAMLPILHKINEKEAWALSLSEEEFKAKTDEFRERYQKGESLDSFIPEAFALAREAARRILGERPYDVQILGSLVLHSGKIVEMKTGEGKTLMSVAAAYLNSLTGKGVHIVTVNDYLAERDADWMRPVYSYLGVSVGVILSNMENDARRIEYNCDITYGTNNEFGFDYLRDNMQMRLKDKTQREFSFAIVDEIDSILIDEARTPLIISGAAEDDTQRFFEVDRLIGQLKEVEKNPETGEYPNELEGEEVIGDYTIDEKSKRVSFTDSGMLHIQDILQRQGLIKSGNLFDEENFEYIHYFTQSVRAHVLFHIDVDYVIQDGQVQIVDEFTGRVLEGRRYSDGLHQAIEAKEHIKIAQRNRTLATITFQNFFRMYDKLSGMTGTADTEAVEFTKIYNLDVVVIPTNLPVARKDEHDVIYLNENDKFEALCTEISEAYKRGQPVLVGTVSIEKSELISKLLTKRGVRHEVLNAKNHEREALIIAEAGAKGSVTIATNMAGRGTDIKLGGSPEMRAKKRTGTNPNPDYYEKVLAEEYAKWQSDYNEVKELGGLYVIGTERHESRRIDNQLRGRSGRQGDPGRSKFFLSLDDDLMRLFGGENLKNVMSKIGMRAGEPIEHPWINKSIEKAQTKVENRNFDIRKHLLEYDDVLNEQRSFIYEQRNAILEDENLIERIYATLEEFISEKFDEYSSSSKAEKEERARLIKDIFREKFSYTLTEEDFANIDKKNHEEEINEFVEHFTKELKEKEALAGKENLNMFIRYQYLQAIDKKWLDHLENLESLREAVYLRSYGQKNPLTEYKLEGFDIFYSMLDDIRIEIASRLVRVQISTEEEAHASRQMRSIQGNAQHNSMGSFSGSGHGMGPTALSARSRPENAQVVRTVPKVGRNDPCPCGSGKKYKYCCGKNG.

ATP is bound by residues Q87, 105-109 (GEGKT), and D519. The disordered stretch occupies residues 850–891 (HASRQMRSIQGNAQHNSMGSFSGSGHGMGPTALSARSRPENA). The span at 854–865 (QMRSIQGNAQHN) shows a compositional bias: polar residues. Zn(2+) is bound by residues C906, C908, C917, and C918.

The protein belongs to the SecA family. In terms of assembly, monomer and homodimer. Part of the essential Sec protein translocation apparatus which comprises SecA, SecYEG and auxiliary proteins SecDF. Other proteins may also be involved. It depends on Zn(2+) as a cofactor.

It is found in the cell inner membrane. The protein resides in the cytoplasm. The catalysed reaction is ATP + H2O + cellular proteinSide 1 = ADP + phosphate + cellular proteinSide 2.. Functionally, part of the Sec protein translocase complex. Interacts with the SecYEG preprotein conducting channel. Has a central role in coupling the hydrolysis of ATP to the transfer of proteins into and across the cell membrane, serving as an ATP-driven molecular motor driving the stepwise translocation of polypeptide chains across the membrane. The protein is Protein translocase subunit SecA of Treponema denticola (strain ATCC 35405 / DSM 14222 / CIP 103919 / JCM 8153 / KCTC 15104).